A 350-amino-acid polypeptide reads, in one-letter code: 4-hydroxy-3-methylbut-2-enyl diphosphate reductase (350 aa).

C19 is a binding site for [4Fe-4S] cluster. 2 residues coordinate (2E)-4-hydroxy-3-methylbut-2-enyl diphosphate: H48 and H84. Dimethylallyl diphosphate-binding residues include H48 and H84. Positions 48 and 84 each coordinate isopentenyl diphosphate. A [4Fe-4S] cluster-binding site is contributed by C106. Residue H134 participates in (2E)-4-hydroxy-3-methylbut-2-enyl diphosphate binding. H134 serves as a coordination point for dimethylallyl diphosphate. Residue H134 coordinates isopentenyl diphosphate. The active-site Proton donor is E136. T175 contributes to the (2E)-4-hydroxy-3-methylbut-2-enyl diphosphate binding site. C205 serves as a coordination point for [4Fe-4S] cluster. (2E)-4-hydroxy-3-methylbut-2-enyl diphosphate-binding residues include S233, S234, N235, and S278. Positions 233, 234, 235, and 278 each coordinate dimethylallyl diphosphate. 4 residues coordinate isopentenyl diphosphate: S233, S234, N235, and S278.

It belongs to the IspH family. The cofactor is [4Fe-4S] cluster.

The catalysed reaction is isopentenyl diphosphate + 2 oxidized [2Fe-2S]-[ferredoxin] + H2O = (2E)-4-hydroxy-3-methylbut-2-enyl diphosphate + 2 reduced [2Fe-2S]-[ferredoxin] + 2 H(+). It catalyses the reaction dimethylallyl diphosphate + 2 oxidized [2Fe-2S]-[ferredoxin] + H2O = (2E)-4-hydroxy-3-methylbut-2-enyl diphosphate + 2 reduced [2Fe-2S]-[ferredoxin] + 2 H(+). It functions in the pathway isoprenoid biosynthesis; dimethylallyl diphosphate biosynthesis; dimethylallyl diphosphate from (2E)-4-hydroxy-3-methylbutenyl diphosphate: step 1/1. Its pathway is isoprenoid biosynthesis; isopentenyl diphosphate biosynthesis via DXP pathway; isopentenyl diphosphate from 1-deoxy-D-xylulose 5-phosphate: step 6/6. Its function is as follows. Catalyzes the conversion of 1-hydroxy-2-methyl-2-(E)-butenyl 4-diphosphate (HMBPP) into a mixture of isopentenyl diphosphate (IPP) and dimethylallyl diphosphate (DMAPP). Acts in the terminal step of the DOXP/MEP pathway for isoprenoid precursor biosynthesis. In Brucella anthropi (strain ATCC 49188 / DSM 6882 / CCUG 24695 / JCM 21032 / LMG 3331 / NBRC 15819 / NCTC 12168 / Alc 37) (Ochrobactrum anthropi), this protein is 4-hydroxy-3-methylbut-2-enyl diphosphate reductase.